Reading from the N-terminus, the 237-residue chain is 2,3-bisphosphoglycerate-dependent phosphoglycerate mutase (237 aa).

Substrate is bound by residues 8-15, 21-22, R60, 87-90, K98, 114-115, and 180-181; these read RHGQSQWN, TG, ERHY, RR, and GN. H9 functions as the Tele-phosphohistidine intermediate in the catalytic mechanism. E87 (proton donor/acceptor) is an active-site residue.

Belongs to the phosphoglycerate mutase family. BPG-dependent PGAM subfamily. Homodimer.

It carries out the reaction (2R)-2-phosphoglycerate = (2R)-3-phosphoglycerate. The protein operates within carbohydrate degradation; glycolysis; pyruvate from D-glyceraldehyde 3-phosphate: step 3/5. Catalyzes the interconversion of 2-phosphoglycerate and 3-phosphoglycerate. The polypeptide is 2,3-bisphosphoglycerate-dependent phosphoglycerate mutase (Caulobacter sp. (strain K31)).